We begin with the raw amino-acid sequence, 208 residues long: 3-demethoxyubiquinol 3-hydroxylase (208 aa).

6 residues coordinate Fe cation: E57, E87, H90, E139, E171, and H174.

It belongs to the COQ7 family. Fe cation is required as a cofactor.

The protein localises to the cell membrane. The catalysed reaction is a 5-methoxy-2-methyl-3-(all-trans-polyprenyl)benzene-1,4-diol + AH2 + O2 = a 3-demethylubiquinol + A + H2O. Its pathway is cofactor biosynthesis; ubiquinone biosynthesis. Its function is as follows. Catalyzes the hydroxylation of 2-nonaprenyl-3-methyl-6-methoxy-1,4-benzoquinol during ubiquinone biosynthesis. The protein is 3-demethoxyubiquinol 3-hydroxylase of Burkholderia thailandensis (strain ATCC 700388 / DSM 13276 / CCUG 48851 / CIP 106301 / E264).